The chain runs to 48 residues: Bacteriocin plantaricin-A (48 aa).

A propeptide spanning residues 1-25 (MKIQIKGMKQLSNKEMQKIVGGKSS) is cleaved from the precursor.

In terms of assembly, active plantaricin A is composed of an alpha chain and a beta chain.

This heat stable bacteriocin inhibits the growth of closely related Lactobacillus species. It may act as a pore-forming protein, creating a channel in the cell membrane through a 'barrel stave' mechanism. In Lactiplantibacillus plantarum (strain ATCC BAA-793 / NCIMB 8826 / WCFS1) (Lactobacillus plantarum), this protein is Bacteriocin plantaricin-A (plnA).